Here is a 467-residue protein sequence, read N- to C-terminus: 3-isopropylmalate dehydratase large subunit (467 aa).

3 residues coordinate [4Fe-4S] cluster: Cys349, Cys409, and Cys412. The segment at Pro422–Arg443 is disordered.

Belongs to the aconitase/IPM isomerase family. LeuC type 1 subfamily. As to quaternary structure, heterodimer of LeuC and LeuD. [4Fe-4S] cluster is required as a cofactor.

It carries out the reaction (2R,3S)-3-isopropylmalate = (2S)-2-isopropylmalate. It participates in amino-acid biosynthesis; L-leucine biosynthesis; L-leucine from 3-methyl-2-oxobutanoate: step 2/4. In terms of biological role, catalyzes the isomerization between 2-isopropylmalate and 3-isopropylmalate, via the formation of 2-isopropylmaleate. This is 3-isopropylmalate dehydratase large subunit from Paramagnetospirillum magneticum (strain ATCC 700264 / AMB-1) (Magnetospirillum magneticum).